Reading from the N-terminus, the 181-residue chain is Ribosome maturation factor RimM (181 aa).

The PRC barrel domain maps to 98 to 172 (EDEFYFEDLI…RIVIPELSLW (75 aa)).

This sequence belongs to the RimM family. In terms of assembly, binds ribosomal protein uS19.

The protein localises to the cytoplasm. In terms of biological role, an accessory protein needed during the final step in the assembly of 30S ribosomal subunit, possibly for assembly of the head region. Essential for efficient processing of 16S rRNA. May be needed both before and after RbfA during the maturation of 16S rRNA. It has affinity for free ribosomal 30S subunits but not for 70S ribosomes. This chain is Ribosome maturation factor RimM, found in Hyphomonas neptunium (strain ATCC 15444).